The sequence spans 289 residues: Coiled-coil domain-containing protein 137 (289 aa).

Disordered stretches follow at residues 1–64, 149–184, and 204–225; these read MAGA…QEIP, EVQA…EKAA, and QPPE…GRRS. Over residues 7 to 20 the composition is skewed to low complexity; sequence GAAVSRVQAGPGSP. At S19 the chain carries Phosphoserine. The stretch at 155-197 forms a coiled coil; it reads KEKSEQKKAKKAFQKRRLDKVRRKKEEKAADRLEQELLRDTVK. Residues 162–177 are compositionally biased toward basic residues; sequence KAKKAFQKRRLDKVRR. S233 bears the Phosphoserine mark. The stretch at 247-273 forms a coiled coil; that stretch reads RQRIVEEERERAVQAYRALKQRQQQLH. Positions 265-289 are disordered; it reads LKQRQQQLHGERPHLTSRKKPEPQL. Residues 273–289 are compositionally biased toward basic and acidic residues; it reads HGERPHLTSRKKPEPQL.

Its subcellular location is the chromosome. This Homo sapiens (Human) protein is Coiled-coil domain-containing protein 137 (CCDC137).